A 184-amino-acid polypeptide reads, in one-letter code: Ferredoxin-thioredoxin reductase subunit A2, chloroplastic (184 aa).

A chloroplast-targeting transit peptide spans Met1 to Arg71.

The protein belongs to the ferredoxin thioredoxin reductase alpha subunit family. Heterodimer of subunit A (variable subunit) and subunit B (catalytic subunit). Heterodimeric FTR forms a complex with ferredoxin and thioredoxin.

It is found in the plastid. The protein localises to the chloroplast. Variable subunit of the ferredoxin-thioredoxin reductase (FTR), which catalyzes the two-electron reduction of thioredoxins by the electrons provided by reduced ferredoxin. This Arabidopsis thaliana (Mouse-ear cress) protein is Ferredoxin-thioredoxin reductase subunit A2, chloroplastic.